Here is a 55-residue protein sequence, read N- to C-terminus: Large ribosomal subunit protein bL33 (55 aa).

This sequence belongs to the bacterial ribosomal protein bL33 family.

The protein is Large ribosomal subunit protein bL33 of Enterobacter sp. (strain 638).